The sequence spans 282 residues: NADPH-dependent 7-cyano-7-deazaguanine reductase (282 aa).

Residue 88 to 90 (IES) participates in substrate binding. 90–91 (SK) contacts NADPH. Catalysis depends on C190, which acts as the Thioimide intermediate. The Proton donor role is filled by D197. Residue 229–230 (HE) coordinates substrate. 258–259 (RG) provides a ligand contact to NADPH.

Belongs to the GTP cyclohydrolase I family. QueF type 2 subfamily. Homodimer.

The protein localises to the cytoplasm. It catalyses the reaction 7-aminomethyl-7-carbaguanine + 2 NADP(+) = 7-cyano-7-deazaguanine + 2 NADPH + 3 H(+). The protein operates within tRNA modification; tRNA-queuosine biosynthesis. In terms of biological role, catalyzes the NADPH-dependent reduction of 7-cyano-7-deazaguanine (preQ0) to 7-aminomethyl-7-deazaguanine (preQ1). In Escherichia coli O81 (strain ED1a), this protein is NADPH-dependent 7-cyano-7-deazaguanine reductase.